Here is a 233-residue protein sequence, read N- to C-terminus: Large ribosomal subunit protein uL1 (233 aa).

The protein belongs to the universal ribosomal protein uL1 family. In terms of assembly, part of the 50S ribosomal subunit.

Its function is as follows. Binds directly to 23S rRNA. The L1 stalk is quite mobile in the ribosome, and is involved in E site tRNA release. In terms of biological role, protein L1 is also a translational repressor protein, it controls the translation of the L11 operon by binding to its mRNA. The protein is Large ribosomal subunit protein uL1 of Aeromonas salmonicida (strain A449).